The primary structure comprises 470 residues: E3 SUMO-protein ligase EGR2 (470 aa).

Over residues 126–141 (PPASTTASSSVTSASP) the composition is skewed to low complexity. Disordered stretches follow at residues 126–153 (PPAS…GVCT), 159–178 (PELD…SGCT), and 185–210 (PSAF…SYPS). The span at 190-202 (SPPSTTSTSSLAY) shows a compositional bias: low complexity. Lys-247 is modified (N6-acetyllysine; by EP300). The span at 275 to 291 (GPGAGVTGPGASGGGEG) shows a compositional bias: gly residues. The segment at 275–345 (GPGAGVTGPG…PYPCPAEGCD (71 aa)) is disordered. C2H2-type zinc fingers lie at residues 337-361 (YPCP…IRIH), 367-389 (FQCR…IRTH), and 395-417 (FACD…TKIH). The disordered stretch occupies residues 408 to 470 (DERKRHTKIH…ASCTSRTRTP (63 aa)). Basic residues predominate over residues 412-422 (RHTKIHLRQKE). A compositionally biased stretch (low complexity) spans 426-439 (SAPSAPPSAQSSAS). The segment covering 440–450 (GPGGSQAGGSL) has biased composition (gly residues).

The protein belongs to the EGR C2H2-type zinc-finger protein family. As to quaternary structure, interacts with HCFC1. Interacts with WWP2. Interacts with UBC9. Interacts with CITED1. Interacts (via phosphorylated form) with SFN. Ubiquitinated by WWP2 leading to proteasomal degradation. Post-translationally, acetylated at Lys-247. May be deacetylated by HDAC6, HDAC10 or SIRT1. As to expression, expressed mainly in the thymus.

It localises to the nucleus. It participates in protein modification; protein sumoylation. In terms of biological role, sequence-specific DNA-binding transcription factor. Plays a role in hindbrain segmentation by regulating the expression of a subset of homeobox containing genes and in Schwann cell myelination by regulating the expression of genes involved in the formation and maintenance of myelin. Binds to two EGR2-consensus sites EGR2A (5'-CTGTAGGAG-3') and EGR2B (5'-ATGTAGGTG-3') in the HOXB3 enhancer and promotes HOXB3 transcriptional activation. Binds to specific DNA sites located in the promoter region of HOXA4, HOXB2 and ERBB2. Regulates hindbrain segmentation by controlling the expression of Hox genes, such as HOXA4, HOXB3 and HOXB2, and thereby specifying odd and even rhombomeres. Promotes the expression of HOXB3 in the rhombomere r5 and of HOXB3 in r3 and r5 in the hindbrain. Regulates myelination in the peripheral nervous system after birth, possibly by regulating the expression of myelin proteins, such as MPZ, and by promoting the differentiation of Schwann cells. Involved in the development of the jaw openener musculature, probably by playing a role in its innervation through trigeminal motor neurons. May play a role in adipogenesis, possibly by regulating the expression of CEBPB. E3 SUMO-protein ligase helping SUMO1 conjugation to its coregulators NAB1 and NAB2, whose sumoylation down-regulates EGR2 transcriptional activity. This Mus musculus (Mouse) protein is E3 SUMO-protein ligase EGR2 (Egr2).